A 154-amino-acid polypeptide reads, in one-letter code: Golgi-associated plant pathogenesis-related protein 1 (154 aa).

The interval 1-21 is disordered; sequence MGKSASKQFHNEVLKAHNEYR. A lipid anchor (N-myristoyl glycine) is attached at G2. Residues 9–21 are compositionally biased toward basic and acidic residues; sequence FHNEVLKAHNEYR. One can recognise an SCP domain in the interval 14–132; it reads LKAHNEYRQK…SDGSSFVVAR (119 aa). A coiled-coil region spans residues 30–53; it reads KLCKNLNREAQQYSEALASTRILK. The tract at residues 91 to 98 is interaction with CAV1; sequence NFQQPGFT.

The protein belongs to the CRISP family. As to quaternary structure, homodimer. Interacts with CAV1. In terms of tissue distribution, highest expression in lung and peripheral leukocytes, and minor expression in liver and kidney.

It is found in the golgi apparatus membrane. The polypeptide is Golgi-associated plant pathogenesis-related protein 1 (GLIPR2) (Homo sapiens (Human)).